Reading from the N-terminus, the 107-residue chain is Integration host factor subunit alpha (107 aa).

It belongs to the bacterial histone-like protein family. As to quaternary structure, heterodimer of an alpha and a beta chain.

Functionally, this protein is one of the two subunits of integration host factor, a specific DNA-binding protein that functions in genetic recombination as well as in transcriptional and translational control. This Brucella abortus (strain S19) protein is Integration host factor subunit alpha.